A 93-amino-acid chain; its full sequence is Pyrimidine/purine nucleoside phosphorylase (93 aa).

This sequence belongs to the nucleoside phosphorylase PpnP family.

It catalyses the reaction a purine D-ribonucleoside + phosphate = a purine nucleobase + alpha-D-ribose 1-phosphate. It carries out the reaction adenosine + phosphate = alpha-D-ribose 1-phosphate + adenine. The catalysed reaction is cytidine + phosphate = cytosine + alpha-D-ribose 1-phosphate. The enzyme catalyses guanosine + phosphate = alpha-D-ribose 1-phosphate + guanine. It catalyses the reaction inosine + phosphate = alpha-D-ribose 1-phosphate + hypoxanthine. It carries out the reaction thymidine + phosphate = 2-deoxy-alpha-D-ribose 1-phosphate + thymine. The catalysed reaction is uridine + phosphate = alpha-D-ribose 1-phosphate + uracil. The enzyme catalyses xanthosine + phosphate = alpha-D-ribose 1-phosphate + xanthine. Its function is as follows. Catalyzes the phosphorolysis of diverse nucleosides, yielding D-ribose 1-phosphate and the respective free bases. Can use uridine, adenosine, guanosine, cytidine, thymidine, inosine and xanthosine as substrates. Also catalyzes the reverse reactions. This chain is Pyrimidine/purine nucleoside phosphorylase, found in Pseudomonas aeruginosa (strain LESB58).